The sequence spans 158 residues: Peroxidase (158 aa).

Residue Pro-2 coordinates substrate. Residue His-32 participates in heme b binding. Thr-33 lines the Ca(2+) pocket. A disulfide bond links Cys-39 and Cys-64. A glycan (N-linked (GlcNAc...) asparagine) is linked at Asn-48. Residues Asp-78, Thr-81, and Asp-86 each coordinate Ca(2+).

This sequence belongs to the peroxidase family. Classical plant (class III) peroxidase subfamily. It depends on Ca(2+) as a cofactor. Requires heme b as cofactor.

The catalysed reaction is 2 a phenolic donor + H2O2 = 2 a phenolic radical donor + 2 H2O. Its function is as follows. Removal of H(2)O(2), oxidation of toxic reductants, biosynthesis and degradation of lignin, suberization, auxin catabolism, response to environmental stresses such as wounding, pathogen attack and oxidative stress. These functions might be dependent on each isozyme/isoform in each plant tissue. The protein is Peroxidase of Lupinus polyphyllus (Large-leaved lupine).